The following is a 650-amino-acid chain: Putative secretin GspD (650 aa).

Residues 1–23 (MKGLNKITCCLLAALLMPCAGHA) form the signal peptide. Positions 24–122 (ENEQYGANFN…IADSSRPGVG (99 aa)) are N0. The interval 124 to 188 (ELVTRIVPLE…EVIKRVDVIG (65 aa)) is N1. The interval 189-263 (TEKQQIIHLE…LLKSLDVEES (75 aa)) is N2. The interval 266 to 342 (GNTRVYYLKY…KLATVIARLD (77 aa)) is N3. The secretin stretch occupies residues 345–596 (RAQVLVEAII…VFIRPTIIRD (252 aa)). The interval 598–650 (DVYRSLSKEKYTRYRQEQQQRIDGKSKALVGSEDLPVLDENTFNSHAPAPSSR) is s domain.

It belongs to the bacterial secretin family. GSP D subfamily. Forms a cylindrical channel with 15 subunits; approximately 25% of the particles have 16-subunit channels. Closed pentadeacameric channels are 180 Angstroms long and 145 Angstroms in diameter. Each subunit turns in a clock-wise manner around the channel.

The protein localises to the cell outer membrane. Functionally, involved in a type II secretion system (T2SS, formerly general secretion pathway, GSP) for the export of folded proteins across the outer membrane. This subunit would form the outer membrane channel. The chain is Putative secretin GspD (gspD) from Escherichia coli (strain K12).